The chain runs to 146 residues: 3-dehydroquinate dehydratase (146 aa).

Residue tyrosine 23 is the Proton acceptor of the active site. Substrate is bound by residues asparagine 75, histidine 81, and aspartate 88. The Proton donor role is filled by histidine 101. Residues 102–103 (LS) and arginine 112 each bind substrate.

This sequence belongs to the type-II 3-dehydroquinase family. As to quaternary structure, homododecamer.

It catalyses the reaction 3-dehydroquinate = 3-dehydroshikimate + H2O. It participates in metabolic intermediate biosynthesis; chorismate biosynthesis; chorismate from D-erythrose 4-phosphate and phosphoenolpyruvate: step 3/7. Functionally, catalyzes a trans-dehydration via an enolate intermediate. The polypeptide is 3-dehydroquinate dehydratase (Saccharophagus degradans (strain 2-40 / ATCC 43961 / DSM 17024)).